The chain runs to 314 residues: E3 ubiquitin-protein ligase SINA-like 11 (314 aa).

Polar residues predominate over residues 1–12 (MEDSNSHPQNQT). The interval 1 to 31 (MEDSNSHPQNQTSKRKSSHPQKKQRMENETR) is disordered. Residues 13–23 (SKRKSSHPQKK) are compositionally biased toward basic residues. The RING-type; degenerate zinc finger occupies 43–81 (CPVCFEPLTIPTFQCDDGHIVCNFCFAKVSNKCPGPGCD). The SBD stretch occupies residues 95-280 (VLESAFVPCQ…PANEVQQVTI (186 aa)). Residues 98-156 (SAFVPCQNTEFGCTKSVSYEKVSSHEKECNYSQCSCPNLECNYTGSYNIIYGHFMRRHL) form an SIAH-type zinc finger. Residues C103, C110, H122, C126, C133, C138, H150, and H155 each contribute to the Zn(2+) site.

The protein belongs to the SINA (Seven in absentia) family.

It carries out the reaction S-ubiquitinyl-[E2 ubiquitin-conjugating enzyme]-L-cysteine + [acceptor protein]-L-lysine = [E2 ubiquitin-conjugating enzyme]-L-cysteine + N(6)-ubiquitinyl-[acceptor protein]-L-lysine.. It participates in protein modification; protein ubiquitination. Its function is as follows. E3 ubiquitin-protein ligase that mediates ubiquitination and subsequent proteasomal degradation of target proteins. E3 ubiquitin ligases accept ubiquitin from an E2 ubiquitin-conjugating enzyme in the form of a thioester and then directly transfers the ubiquitin to targeted substrates. It probably triggers the ubiquitin-mediated degradation of different substrates. The sequence is that of E3 ubiquitin-protein ligase SINA-like 11 from Arabidopsis thaliana (Mouse-ear cress).